Reading from the N-terminus, the 469-residue chain is Serine/threonine-protein kinases PknA (469 aa).

The 262-residue stretch at 20-281 folds into the Protein kinase domain; it reads YRLQWIIGHG…NEMALAVSAV (262 aa). Residues 26–34 and Lys-49 contribute to the ATP site; that span reads IGHGGMSTV. Asp-148 serves as the catalytic Proton acceptor. 2 disordered regions span residues 286–307 and 359–454; these read RPPQ…PSES and FNDT…PADD. Low complexity-rich tracts occupy residues 365 to 384 and 399 to 413; these read ETTT…EETT and TEPE…TSEE. A compositionally biased stretch (polar residues) spans 430–443; the sequence is VPQIPTSTPRTSAS.

This sequence belongs to the protein kinase superfamily. Ser/Thr protein kinase family.

The enzyme catalyses L-seryl-[protein] + ATP = O-phospho-L-seryl-[protein] + ADP + H(+). It carries out the reaction L-threonyl-[protein] + ATP = O-phospho-L-threonyl-[protein] + ADP + H(+). The protein is Serine/threonine-protein kinases PknA (pknA) of Corynebacterium glutamicum (strain ATCC 13032 / DSM 20300 / JCM 1318 / BCRC 11384 / CCUG 27702 / LMG 3730 / NBRC 12168 / NCIMB 10025 / NRRL B-2784 / 534).